We begin with the raw amino-acid sequence, 109 residues long: ATPase inhibitor mai-2, mitochondrial (109 aa).

2 disordered regions span residues 18-39 and 73-109; these read FSAG…SIRD and EEVK…LGKE. Gly residues predominate over residues 21-35; sequence GGHGDGAGRGGGSGG. Residues 55–109 adopt a coiled-coil conformation; that stretch reads YFYKKQKAQLQELREHIQEEVKHHEGQLENHKKVLERHQQRISEIEAQERALGKE.

Belongs to the ATPase inhibitor family.

The protein localises to the mitochondrion. Functionally, thought to be a regulatory component of the ATP-synthesizing complex in the mitochondria. Activity is pH dependent. In Caenorhabditis elegans, this protein is ATPase inhibitor mai-2, mitochondrial (mai-2).